The following is a 135-amino-acid chain: Large ribosomal subunit protein uL16c (135 aa).

This sequence belongs to the universal ribosomal protein uL16 family. Part of the 50S ribosomal subunit.

It localises to the plastid. The protein localises to the chloroplast. The chain is Large ribosomal subunit protein uL16c from Jasminum nudiflorum (Winter jasmine).